Here is a 493-residue protein sequence, read N- to C-terminus: MSLLKMEYNLYAELKKMTCGQTISLFNEDGDFVEVEPGSSFKFLIPKGFYSSPSVKTSLVFETLTTTDNKITSINPTNAPKLYPLQRKVVSEVVSNMRKMIELKRPLYITLHLACGFGKTITTCYLMATHGRKTVICVPNKMLIHQWKTQVEAVGLEHKISIDGVSSLLKELKTQSPDVLIVVSRHLTNDAFCKYINKHYDLFILDESHTYNLMNNTAVTRFLAYYPPMMCYFLTATPRPANRIYCNSIINIAKLSDLKKTIYVVDSFFEPYSTDNIRHMIKRLDGPSNKYHIYTEKLLSVDEPRNQLILNTLVEEFKSGTINRILVITKLREHMVLFYKRLLDLFGPEVVFIGDAQNRRTPDMVKSIKELNRFIFVSTLFYSGTGLDIPSLDSLFICSAVINNMQIEQLLGRVCRETELLDRTVYVFPNTSIKEIKYMIGNFVQRIISLSVDKLGFKQESYRKHQESDPTSACTASSREERVLNRIFNSQNR.

One can recognise a Helicase ATP-binding domain in the interval 100–256 (MIELKRPLYI…NSIINIAKLS (157 aa)). 113–120 (LACGFGKT) lines the ATP pocket. The DESH box signature appears at 206–209 (DESH).

The protein belongs to the helicase family. Poxviruses subfamily. As to quaternary structure, interacts with G2. Might be part of a transcription complex composed at least of G2, A18, and H5.

It is found in the virion. DNA helicase which seems to act as a postreplicative transcription termination factor. Involved in ATP-dependent release of nascent RNA. Forms a stable complex with single-stranded DNA, and to a lesser extent RNA. The polypeptide is Transcript termination protein A18 (Cowpox virus (strain GRI-90 / Grishak) (CPV)).